Reading from the N-terminus, the 147-residue chain is Calmodulin (147 aa).

EF-hand domains lie at 8–43 (EQIA…LGLS), 44–79 (PSEA…QLKC), 81–116 (DSEQ…IGEK), and 120–147 (AEVD…LLSK). The Ca(2+) site is built by Asp-21, Asp-23, Ser-25, Ser-27, Glu-32, Asp-57, Asp-59, Asn-61, Glu-68, Asp-94, Asn-96, Asp-98, and Glu-105.

This sequence belongs to the calmodulin family.

Functionally, calmodulin mediates the control of a large number of enzymes, ion channels and other proteins by Ca(2+). Among the enzymes to be stimulated by the calmodulin-Ca(2+) complex are a number of protein kinases and phosphatases. This is Calmodulin (CMD1) from Kluyveromyces lactis (strain ATCC 8585 / CBS 2359 / DSM 70799 / NBRC 1267 / NRRL Y-1140 / WM37) (Yeast).